A 288-amino-acid chain; its full sequence is Aquaporin PIP1-5 (288 aa).

The tract at residues 1 to 36 (MEGKEEDVRLGANRYSERQPIGTAAQGTEEKDYKEP) is disordered. 2 helical membrane passes run 57–77 (IAEFVATFLFLYISILTVMGV) and 92–114 (IAWSFGGMIFALVYCTAGISGGH). An NPA 1 motif is present at residues 116–118 (NPA). 3 helical membrane-spanning segments follow: residues 135–155 (LFYMVMQCLGAICGAGVVKGF), 177–197 (GDGLGAEIVGTFVLVYTVFSA), and 211–231 (ILAPLPIGFAVFLVHLATIPI). The NPA 2 motif lies at 237 to 239 (NPA). A helical membrane pass occupies residues 259–279 (IFWVGPFIGAALAAIYHVVII).

Belongs to the MIP/aquaporin (TC 1.A.8) family. PIP (TC 1.A.8.11) subfamily. In terms of tissue distribution, highly expressed in roots and at lower levels in anthers and silks.

It is found in the cell membrane. Its function is as follows. Water channel required to facilitate the transport of water across cell membrane. In Zea mays (Maize), this protein is Aquaporin PIP1-5 (PIP1-5).